A 115-amino-acid polypeptide reads, in one-letter code: Large ribosomal subunit protein bL20c (115 aa).

This sequence belongs to the bacterial ribosomal protein bL20 family.

The protein resides in the plastid. It localises to the chloroplast. Its function is as follows. Binds directly to 23S ribosomal RNA and is necessary for the in vitro assembly process of the 50S ribosomal subunit. It is not involved in the protein synthesizing functions of that subunit. In Chlorella vulgaris (Green alga), this protein is Large ribosomal subunit protein bL20c (rpl20).